The sequence spans 309 residues: Dihydroorotate dehydrogenase B (NAD(+)), catalytic subunit (309 aa).

FMN-binding positions include S21 and 45–46; that span reads KA. Substrate contacts are provided by residues K45 and 69 to 73; that span reads NAIGL. Residues N99 and N127 each contribute to the FMN site. N127 is a binding site for substrate. C130 functions as the Nucleophile in the catalytic mechanism. Residues K165 and I191 each contribute to the FMN site. Substrate is bound at residue 192 to 193; it reads NT. FMN is bound by residues G217, 243–244, and 265–266; these read GG and GT.

It belongs to the dihydroorotate dehydrogenase family. Type 1 subfamily. In terms of assembly, heterotetramer of 2 PyrK and 2 PyrD type B subunits. FMN serves as cofactor.

The protein resides in the cytoplasm. The enzyme catalyses (S)-dihydroorotate + NAD(+) = orotate + NADH + H(+). It participates in pyrimidine metabolism; UMP biosynthesis via de novo pathway; orotate from (S)-dihydroorotate (NAD(+) route): step 1/1. Catalyzes the conversion of dihydroorotate to orotate with NAD(+) as electron acceptor. This is Dihydroorotate dehydrogenase B (NAD(+)), catalytic subunit (pyrD) from Bacillus mycoides (strain KBAB4) (Bacillus weihenstephanensis).